A 508-amino-acid polypeptide reads, in one-letter code: Photosystem II CP47 reaction center protein (508 aa).

The next 6 membrane-spanning stretches (helical) occupy residues 21–36, 101–115, 140–156, 203–218, 237–252, and 457–472; these read AVHIMHTALVSGWAGS, IILSGLLFLAAIWHW, GIHLFLSGLLCFGFGAF, IAAGILGILAGLFHLS, VLSSSIAAVFFAAFIV, and CFALLFFFGHIWHGAR.

The protein belongs to the PsbB/PsbC family. PsbB subfamily. As to quaternary structure, PSII is composed of 1 copy each of membrane proteins PsbA, PsbB, PsbC, PsbD, PsbE, PsbF, PsbH, PsbI, PsbJ, PsbK, PsbL, PsbM, PsbT, PsbX, PsbY, PsbZ, Psb30/Ycf12, at least 3 peripheral proteins of the oxygen-evolving complex and a large number of cofactors. It forms dimeric complexes. Requires Binds multiple chlorophylls. PSII binds additional chlorophylls, carotenoids and specific lipids. as cofactor.

The protein localises to the plastid. The protein resides in the chloroplast thylakoid membrane. Functionally, one of the components of the core complex of photosystem II (PSII). It binds chlorophyll and helps catalyze the primary light-induced photochemical processes of PSII. PSII is a light-driven water:plastoquinone oxidoreductase, using light energy to abstract electrons from H(2)O, generating O(2) and a proton gradient subsequently used for ATP formation. The chain is Photosystem II CP47 reaction center protein from Chara vulgaris (Common stonewort).